The chain runs to 226 residues: ATP synthase F(0) complex subunit a (226 aa).

6 helical membrane passes run 12–32 (PTMMGLPIVILIVLFPSILFP), 68–88 (WALMLISLILFIGSTNLLGLL), 97–117 (QLSMNLGMAIPLWAGTVITGF), 138–158 (IPMLVIIETISLFIQPMALAV), 164–184 (ITAGHLLIHLIGGATLALMDI), and 189–209 (AFITFTILILLTILEFAVALI).

It belongs to the ATPase A chain family. In terms of assembly, component of the ATP synthase complex composed at least of ATP5F1A/subunit alpha, ATP5F1B/subunit beta, ATP5MC1/subunit c (homooctomer), MT-ATP6/subunit a, MT-ATP8/subunit 8, ATP5ME/subunit e, ATP5MF/subunit f, ATP5MG/subunit g, ATP5MK/subunit k, ATP5MJ/subunit j, ATP5F1C/subunit gamma, ATP5F1D/subunit delta, ATP5F1E/subunit epsilon, ATP5PF/subunit F6, ATP5PB/subunit b, ATP5PD/subunit d, ATP5PO/subunit OSCP. ATP synthase complex consists of a soluble F(1) head domain (subunits alpha(3) and beta(3)) - the catalytic core - and a membrane F(0) domain - the membrane proton channel (subunits c, a, 8, e, f, g, k and j). These two domains are linked by a central stalk (subunits gamma, delta, and epsilon) rotating inside the F1 region and a stationary peripheral stalk (subunits F6, b, d, and OSCP). Interacts with DNAJC30; interaction is direct.

Its subcellular location is the mitochondrion inner membrane. The enzyme catalyses H(+)(in) = H(+)(out). Subunit a, of the mitochondrial membrane ATP synthase complex (F(1)F(0) ATP synthase or Complex V) that produces ATP from ADP in the presence of a proton gradient across the membrane which is generated by electron transport complexes of the respiratory chain. ATP synthase complex consist of a soluble F(1) head domain - the catalytic core - and a membrane F(1) domain - the membrane proton channel. These two domains are linked by a central stalk rotating inside the F(1) region and a stationary peripheral stalk. During catalysis, ATP synthesis in the catalytic domain of F(1) is coupled via a rotary mechanism of the central stalk subunits to proton translocation. With the subunit c (ATP5MC1), forms the proton-conducting channel in the F(0) domain, that contains two crucial half-channels (inlet and outlet) that facilitate proton movement from the mitochondrial intermembrane space (IMS) into the matrix. Protons are taken up via the inlet half-channel and released through the outlet half-channel, following a Grotthuss mechanism. The polypeptide is ATP synthase F(0) complex subunit a (Phoca vitulina (Harbor seal)).